A 289-amino-acid polypeptide reads, in one-letter code: Extracellular ribonuclease (289 aa).

The N-terminal stretch at 1–24 (MTKKLWFLPIVCLFFILGWTAPSA) is a signal peptide. The propeptide occupies 25 to 51 (SAGAPADTNLYSRLAVSTAGGTTLFPQ). The segment at 177 to 197 (FDNGGSEYPKAPGNYYDGDSW) is disordered.

The protein resides in the secreted. Mg(2+)-activated ribonuclease which hydrolyzes RNA apparently nonspecifically into oligonucleotides with 5'-terminal phosphate. The polypeptide is Extracellular ribonuclease (bsn) (Bacillus amyloliquefaciens (Bacillus velezensis)).